The primary structure comprises 408 residues: MSAMPNTSSISVSAAFDAHRPLTLTYIDNPSTKHVIVGMSGGVDSSVSAVLLQQAGFVVEGLFMKNWEEDDGTEYCTAMDDLADAQAVCDKIGIKLHTANFAMEYWDRVFEHFLAEYKAGRTPNPDILCNKEIKFKAFLDYALTLGADYIATGHYTRRSVNYKNNDGIEVAQLLRGLDNNKDQSYFLHAVGGDKLAKTLFPVGELEKPVVRQIAEEHDLITANKKDSTGICFIGERRFKDFLQQYLPAQKGDIVTDDGINIGTHDGLMYYTLGQRGGIGIGGVKDRPEEPWFVLAKDLDNNRLIVGQGHEHPMMLSNELHAYKLDWTDGLPPTDIFSLEGLRCMAKSRYRQPDQACRVFAVNADGSEVRVIFDEPQRAVTPGQSAVFYIEEVCLGGGVIASIDAPCGF.

Residues 38–45 (GMSGGVDS) and Met64 each bind ATP. An interaction with target base in tRNA region spans residues 124-126 (NPD). Residue Cys129 is the Nucleophile of the active site. An intrachain disulfide couples Cys129 to Cys231. Gly153 serves as a coordination point for ATP. An interaction with tRNA region spans residues 181 to 183 (KDQ). The active-site Cysteine persulfide intermediate is Cys231. The tract at residues 348–349 (RY) is interaction with tRNA.

Belongs to the MnmA/TRMU family.

It is found in the cytoplasm. The enzyme catalyses S-sulfanyl-L-cysteinyl-[protein] + uridine(34) in tRNA + AH2 + ATP = 2-thiouridine(34) in tRNA + L-cysteinyl-[protein] + A + AMP + diphosphate + H(+). Functionally, catalyzes the 2-thiolation of uridine at the wobble position (U34) of tRNA, leading to the formation of s(2)U34. This Psychrobacter arcticus (strain DSM 17307 / VKM B-2377 / 273-4) protein is tRNA-specific 2-thiouridylase MnmA.